Reading from the N-terminus, the 90-residue chain is Progonadoliberin-3 (90 aa).

An N-terminal signal peptide occupies residues 1–23; the sequence is MEAGSRVIMQVLLLALVVQVTLS. Position 24 is a pyrrolidone carboxylic acid (Gln24). At Gly33 the chain carries Glycine amide.

This sequence belongs to the GnRH family. As to expression, expressed only in the terminal nerve nucleus of the telencephalon.

The protein localises to the secreted. Its function is as follows. Stimulates the secretion of gonadotropins. In Haplochromis burtoni (Burton's mouthbrooder), this protein is Progonadoliberin-3 (gnrh3).